A 150-amino-acid polypeptide reads, in one-letter code: Small ribosomal subunit protein eS19 (150 aa).

This sequence belongs to the eukaryotic ribosomal protein eS19 family. As to quaternary structure, part of the 30S ribosomal subunit.

May be involved in maturation of the 30S ribosomal subunit. This chain is Small ribosomal subunit protein eS19, found in Thermoplasma acidophilum (strain ATCC 25905 / DSM 1728 / JCM 9062 / NBRC 15155 / AMRC-C165).